The following is a 344-amino-acid chain: Serine/arginine-rich splicing factor 6 (344 aa).

In terms of domain architecture, RRM 1 spans 1-72; the sequence is MPRVYIGRLS…ERVIVEHARG (72 aa). Ser45, Ser81, and Ser84 each carry phosphoserine. The interval 75–103 is disordered; sequence RDRDGYSYGSRSGGGGYSSRRTSGRDKYG. The RRM 2 domain occupies 110–183; that stretch reads YRLIVENLSS…RNIRLIEDKP (74 aa). Lys165 carries the post-translational modification N6-acetyllysine. The disordered stretch occupies residues 176-344; it reads IRLIEDKPRT…RSRSRSSSRD (169 aa). A Glycyl lysine isopeptide (Lys-Gly) (interchain with G-Cter in SUMO2) cross-link involves residue Lys182. Over residues 185 to 250 the composition is skewed to basic residues; sequence TSHRRSYSGS…RKSRSKSKSK (66 aa). Basic and acidic residues-rich tracts occupy residues 264–273 and 280–291; these read RSKDEYEKSR and SPKENGKGDIKS. Residues Ser297 and Ser299 each carry the phosphoserine modification. Ser303 carries the post-translational modification Phosphoserine; by DYRK1A. Ser314 and Ser316 each carry phosphoserine. The segment covering 322–344 has biased composition (basic residues); sequence ATSRSRSRSRSKSRSRSRSSSRD.

The protein belongs to the splicing factor SR family. In terms of assembly, binds SREK1/SFRS12. Interacts with DYRK1A. Extensively phosphorylated on serine residues in the RS domain. Phosphorylated by DYRK1A, probably in the RS domain. Phosphorylation by DYRK1A modulates alternative splice site selection and inhibits the expression of MAPT/Tau exon 10.

The protein resides in the nucleus. It localises to the nucleus speckle. Functionally, plays a role in constitutive splicing and modulates the selection of alternative splice sites. Plays a role in the alternative splicing of MAPT/Tau exon 10. Binds to alternative exons of TNC pre-mRNA and promotes the expression of alternatively spliced TNC. Plays a role in wound healing and in the regulation of keratinocyte differentiation and proliferation via its role in alternative splicing. The sequence is that of Serine/arginine-rich splicing factor 6 (SRSF6) from Homo sapiens (Human).